A 38-amino-acid polypeptide reads, in one-letter code: MPSQEDAVAWSTGCCGLVIVWFVLGRLAGSVAGMFNDR.

This Xanthomonas campestris pv. campestris (strain ATCC 33913 / DSM 3586 / NCPPB 528 / LMG 568 / P 25) protein is Phi-Lf prophage-derived putative minor coat protein (gIX-1).